We begin with the raw amino-acid sequence, 89 residues long: Small ribosomal subunit protein bS18 (89 aa).

This sequence belongs to the bacterial ribosomal protein bS18 family. Part of the 30S ribosomal subunit. Forms a tight heterodimer with protein bS6.

Functionally, binds as a heterodimer with protein bS6 to the central domain of the 16S rRNA, where it helps stabilize the platform of the 30S subunit. The sequence is that of Small ribosomal subunit protein bS18 from Phocaeicola vulgatus (strain ATCC 8482 / DSM 1447 / JCM 5826 / CCUG 4940 / NBRC 14291 / NCTC 11154) (Bacteroides vulgatus).